The primary structure comprises 436 residues: Glutamyl-tRNA reductase (436 aa).

Substrate-binding positions include 49 to 52, serine 109, 114 to 116, and glutamine 120; these read TCNR and EPQ. Cysteine 50 acts as the Nucleophile in catalysis. An NADP(+)-binding site is contributed by 189–194; the sequence is GAGEMC.

The protein belongs to the glutamyl-tRNA reductase family. In terms of assembly, homodimer.

The enzyme catalyses (S)-4-amino-5-oxopentanoate + tRNA(Glu) + NADP(+) = L-glutamyl-tRNA(Glu) + NADPH + H(+). It participates in porphyrin-containing compound metabolism; protoporphyrin-IX biosynthesis; 5-aminolevulinate from L-glutamyl-tRNA(Glu): step 1/2. Functionally, catalyzes the NADPH-dependent reduction of glutamyl-tRNA(Glu) to glutamate 1-semialdehyde (GSA). The polypeptide is Glutamyl-tRNA reductase (Pelobacter propionicus (strain DSM 2379 / NBRC 103807 / OttBd1)).